We begin with the raw amino-acid sequence, 371 residues long: Bifunctional enzyme IspD/IspF (371 aa).

Residues 1-210 (MSEISLIMLA…LDLPTPSFEI (210 aa)) are 2-C-methyl-D-erythritol 4-phosphate cytidylyltransferase. The segment at 211-371 (FTGNGFDVHE…NLKYFDWTRL (161 aa)) is 2-C-methyl-D-erythritol 2,4-cyclodiphosphate synthase. The a divalent metal cation site is built by D217 and H219. 4-CDP-2-C-methyl-D-erythritol 2-phosphate contacts are provided by residues 217-219 (DVH) and 243-244 (HS). Residue H251 participates in a divalent metal cation binding. 4-CDP-2-C-methyl-D-erythritol 2-phosphate contacts are provided by residues 265 to 267 (DIG), 270 to 274 (YPDTD), 341 to 344 (TTTE), F348, and R351.

The protein in the N-terminal section; belongs to the IspD/TarI cytidylyltransferase family. IspD subfamily. This sequence in the C-terminal section; belongs to the IspF family. Requires a divalent metal cation as cofactor.

It carries out the reaction 2-C-methyl-D-erythritol 4-phosphate + CTP + H(+) = 4-CDP-2-C-methyl-D-erythritol + diphosphate. The enzyme catalyses 4-CDP-2-C-methyl-D-erythritol 2-phosphate = 2-C-methyl-D-erythritol 2,4-cyclic diphosphate + CMP. It functions in the pathway isoprenoid biosynthesis; isopentenyl diphosphate biosynthesis via DXP pathway; isopentenyl diphosphate from 1-deoxy-D-xylulose 5-phosphate: step 2/6. It participates in isoprenoid biosynthesis; isopentenyl diphosphate biosynthesis via DXP pathway; isopentenyl diphosphate from 1-deoxy-D-xylulose 5-phosphate: step 4/6. Its function is as follows. Bifunctional enzyme that catalyzes the formation of 4-diphosphocytidyl-2-C-methyl-D-erythritol from CTP and 2-C-methyl-D-erythritol 4-phosphate (MEP) (IspD), and catalyzes the conversion of 4-diphosphocytidyl-2-C-methyl-D-erythritol 2-phosphate (CDP-ME2P) to 2-C-methyl-D-erythritol 2,4-cyclodiphosphate (ME-CPP) with a corresponding release of cytidine 5-monophosphate (CMP) (IspF). In Campylobacter jejuni subsp. jejuni serotype O:23/36 (strain 81-176), this protein is Bifunctional enzyme IspD/IspF.